A 239-amino-acid chain; its full sequence is Flagellin B3 (239 aa).

A propeptide spanning residues 1 to 11 (MLKNFMKNKKG) is cleaved from the precursor. N-linked (GlcNAc...) asparagine glycans are attached at residues asparagine 115 and asparagine 128.

The protein belongs to the archaeal flagellin family. N-linked glycans consist of the 779 Da trisaccharide beta-ManNAc(Thr)-(1-4)-beta-GlcNAc3NAcA-(1-3)-beta-GlcNAc.

The protein resides in the archaeal flagellum. In terms of biological role, flagellin is the subunit protein which polymerizes to form the filaments of archaeal flagella. This is Flagellin B3 (flaB3) from Methanococcus voltae.